We begin with the raw amino-acid sequence, 176 residues long: Large ribosomal subunit protein uL10 (176 aa).

The protein belongs to the universal ribosomal protein uL10 family. Part of the ribosomal stalk of the 50S ribosomal subunit. The N-terminus interacts with L11 and the large rRNA to form the base of the stalk. The C-terminus forms an elongated spine to which L12 dimers bind in a sequential fashion forming a multimeric L10(L12)X complex.

In terms of biological role, forms part of the ribosomal stalk, playing a central role in the interaction of the ribosome with GTP-bound translation factors. This is Large ribosomal subunit protein uL10 (rplJ) from Streptomyces antibioticus.